The chain runs to 160 residues: Coat protein TP3 (160 aa).

It is found in the virion. This Thermoproteus tenax (TTV1) protein is Coat protein TP3.